A 200-amino-acid chain; its full sequence is Pyridoxamine 5'-phosphate oxidase homolog (200 aa).

FMN-binding residues include Phe60, Lys68, and Asn125.

Belongs to the pyridoxamine 5'-phosphate oxidase family. FMN is required as a cofactor.

The protein localises to the cytoplasm. The protein resides in the nucleus. This Saccharomyces cerevisiae (strain ATCC 204508 / S288c) (Baker's yeast) protein is Pyridoxamine 5'-phosphate oxidase homolog.